The sequence spans 668 residues: Fructose-1,6-bisphosphatase class 3 (668 aa).

Belongs to the FBPase class 3 family. Mn(2+) serves as cofactor.

It catalyses the reaction beta-D-fructose 1,6-bisphosphate + H2O = beta-D-fructose 6-phosphate + phosphate. It participates in carbohydrate biosynthesis; gluconeogenesis. The sequence is that of Fructose-1,6-bisphosphatase class 3 from Clostridium botulinum (strain 657 / Type Ba4).